The primary structure comprises 284 residues: Diaminopimelate epimerase (284 aa).

The substrate site is built by Asn-14 and Asn-67. Cys-76 serves as the catalytic Proton donor. Residues 77–78 (GN), Asn-166, Asn-199, and 217–218 (ER) each bind substrate. Cys-226 serves as the catalytic Proton acceptor. Substrate is bound at residue 227-228 (GT).

It belongs to the diaminopimelate epimerase family. In terms of assembly, homodimer.

Its subcellular location is the cytoplasm. It catalyses the reaction (2S,6S)-2,6-diaminopimelate = meso-2,6-diaminopimelate. The protein operates within amino-acid biosynthesis; L-lysine biosynthesis via DAP pathway; DL-2,6-diaminopimelate from LL-2,6-diaminopimelate: step 1/1. Functionally, catalyzes the stereoinversion of LL-2,6-diaminopimelate (L,L-DAP) to meso-diaminopimelate (meso-DAP), a precursor of L-lysine and an essential component of the bacterial peptidoglycan. This chain is Diaminopimelate epimerase, found in Geobacillus sp. (strain WCH70).